The sequence spans 319 residues: MSTVIAVVGPTAVGKSDLSVALALRLTEHGLPAEIINADSMQLYQGMDIGTAKLTPEERRGVPHHLLDVWEVTQTANVADYQRMARAVIDDLHAAGRVPVLVGGSGLYVRAALDELDFPGTDPKVRARLEAELAEQGPLALHARLARLDPEAARAILPTNGRRIVRALEVIEITGGPFTATLPDHVSRYPCVQIGLTAPRPELDERIALRVDRMWEAGLVDEVRALEKAGLRDGFTASRALGYAQILRFLAGECTEEEAKEETVRATRRFARRQESWFRRDPRVHWLPYDAPDLVDRAFALVCEHSDLCFRSATRDEQS.

9–16 (GPTAVGKS) lines the ATP pocket. 11-16 (TAVGKS) provides a ligand contact to substrate. An interaction with substrate tRNA region spans residues 39–42 (DSMQ).

Belongs to the IPP transferase family. In terms of assembly, monomer. It depends on Mg(2+) as a cofactor.

The catalysed reaction is adenosine(37) in tRNA + dimethylallyl diphosphate = N(6)-dimethylallyladenosine(37) in tRNA + diphosphate. Functionally, catalyzes the transfer of a dimethylallyl group onto the adenine at position 37 in tRNAs that read codons beginning with uridine, leading to the formation of N6-(dimethylallyl)adenosine (i(6)A). This Thermobifida fusca (strain YX) protein is tRNA dimethylallyltransferase.